The sequence spans 677 residues: Membrane-associated tyrosine- and threonine-specific cdc2-inhibitory kinase wee-1.3 (677 aa).

Residues 1–22 (MDDTEGNSSMDSIRNGQSSPLP) show a composition bias toward polar residues. Residues 1 to 30 (MDDTEGNSSMDSIRNGQSSPLPQVTPRLPQ) are disordered. Positions 108-355 (FQIDEIIGRG…SRDLLDHPVI (248 aa)) constitute a Protein kinase domain. ATP-binding positions include 114-122 (IGRGSFGEV) and Lys137. Asp228 (proton acceptor) is an active-site residue. Mg(2+) contacts are provided by Asn233 and Asp246. Disordered stretches follow at residues 478–526 (FDND…GTPR) and 632–677 (EPSN…GDEV). Over residues 489–499 (ATCSSSNSSAI) the composition is skewed to polar residues. Basic and acidic residues predominate over residues 638 to 652 (TVDHHTILEQSESPR).

It belongs to the protein kinase superfamily. Ser/Thr protein kinase family. WEE1 subfamily.

Its subcellular location is the golgi apparatus membrane. The protein resides in the cytoplasm. The enzyme catalyses L-seryl-[protein] + ATP = O-phospho-L-seryl-[protein] + ADP + H(+). It catalyses the reaction L-threonyl-[protein] + ATP = O-phospho-L-threonyl-[protein] + ADP + H(+). Its function is as follows. Acts as a negative regulator of entry into mitosis (G2 to M transition) by phosphorylation of the CDK1 kinase during oocyte maturation. Required for oocyte maturation, embryonic development, germline proliferation and initiation of meiosis during spermatogenesis. Required for chromosome structure during mitosis and negative regulation of nuclear envelope breakdown. The chain is Membrane-associated tyrosine- and threonine-specific cdc2-inhibitory kinase wee-1.3 (wee-1.3) from Caenorhabditis elegans.